The following is a 365-amino-acid chain: DNA replication and repair protein RecF (365 aa).

30–37 (GPNGSGKT) lines the ATP pocket.

Belongs to the RecF family.

The protein localises to the cytoplasm. Its function is as follows. The RecF protein is involved in DNA metabolism; it is required for DNA replication and normal SOS inducibility. RecF binds preferentially to single-stranded, linear DNA. It also seems to bind ATP. This Azotobacter vinelandii (strain DJ / ATCC BAA-1303) protein is DNA replication and repair protein RecF.